Reading from the N-terminus, the 279-residue chain is Probable endonuclease 4 (279 aa).

Zn(2+)-binding residues include His-69, His-109, Glu-145, Asp-179, His-182, His-216, Asp-229, His-231, and Glu-261.

This sequence belongs to the AP endonuclease 2 family. It depends on Zn(2+) as a cofactor.

The catalysed reaction is Endonucleolytic cleavage to 5'-phosphooligonucleotide end-products.. Endonuclease IV plays a role in DNA repair. It cleaves phosphodiester bonds at apurinic or apyrimidinic (AP) sites, generating a 3'-hydroxyl group and a 5'-terminal sugar phosphate. The sequence is that of Probable endonuclease 4 from Buchnera aphidicola subsp. Schizaphis graminum (strain Sg).